Here is a 185-residue protein sequence, read N- to C-terminus: Tetrahydromethanopterin S-methyltransferase subunit A 2 (185 aa).

Topologically, residues 1 to 21 (MVDKKVDKKPVPEDWPHIVGD) are cytoplasmic. The chain crosses the membrane as a helical span at residues 22-38 (YVVGDAESPVAVVTLGS). The Extracellular portion of the chain corresponds to 39–185 (HMEDEPVRAG…LNKNKPDENT (147 aa)). 5-hydroxybenzimidazolylcob(I)amide is bound at residue His-88.

Belongs to the MtrA family. The complex is composed of 8 subunits; MtrA, MtrB, MtrC, MtrD, MtrE, MtrF, MtrG and MtrH. 5-hydroxybenzimidazolylcob(I)amide is required as a cofactor.

The protein resides in the cell membrane. It catalyses the reaction 5-methyl-5,6,7,8-tetrahydromethanopterin + coenzyme M + 2 Na(+)(in) = 5,6,7,8-tetrahydromethanopterin + methyl-coenzyme M + 2 Na(+)(out). The protein operates within one-carbon metabolism; methanogenesis from CO(2); methyl-coenzyme M from 5,10-methylene-5,6,7,8-tetrahydromethanopterin: step 2/2. In terms of biological role, part of a complex that catalyzes the formation of methyl-coenzyme M and tetrahydromethanopterin from coenzyme M and methyl-tetrahydromethanopterin. This is an energy-conserving, sodium-ion translocating step. The chain is Tetrahydromethanopterin S-methyltransferase subunit A 2 from Methanothermobacter marburgensis (strain ATCC BAA-927 / DSM 2133 / JCM 14651 / NBRC 100331 / OCM 82 / Marburg) (Methanobacterium thermoautotrophicum).